The chain runs to 364 residues: Dihydroorotate dehydrogenase (quinone) (364 aa).

FMN-binding positions include 61–65 (AGYDK) and T85. Substrate is bound at residue K65. Substrate is bound at residue 110 to 114 (NRLGF). Residues N139 and N170 each contribute to the FMN site. N170 contributes to the substrate binding site. Residue S173 is the Nucleophile of the active site. N175 contributes to the substrate binding site. Residues K215 and S243 each contribute to the FMN site. Substrate is bound at residue 244–245 (NT). FMN-binding positions include G266, G295, and 316 to 317 (YT).

Belongs to the dihydroorotate dehydrogenase family. Type 2 subfamily. As to quaternary structure, monomer. The cofactor is FMN.

The protein resides in the cell membrane. It carries out the reaction (S)-dihydroorotate + a quinone = orotate + a quinol. Its pathway is pyrimidine metabolism; UMP biosynthesis via de novo pathway; orotate from (S)-dihydroorotate (quinone route): step 1/1. Functionally, catalyzes the conversion of dihydroorotate to orotate with quinone as electron acceptor. This chain is Dihydroorotate dehydrogenase (quinone), found in Brucella anthropi (strain ATCC 49188 / DSM 6882 / CCUG 24695 / JCM 21032 / LMG 3331 / NBRC 15819 / NCTC 12168 / Alc 37) (Ochrobactrum anthropi).